We begin with the raw amino-acid sequence, 743 residues long: NAD(P)H-quinone oxidoreductase subunit 5, chloroplastic (743 aa).

16 helical membrane passes run 9–29 (WIIP…LLLF), 40–60 (WAFQ…NLSI), 89–109 (IDPL…MVLI), 125–145 (FAYM…SNLI), 147–167 (IYIF…FWFT), 185–205 (GDFG…SFEF), 224–244 (VFVT…SAQF), 258–278 (TPIS…FLVA), 284–304 (FIVI…TVFF), 327–347 (LGYM…FHLI), 354–374 (ALLF…VGYC), 396–416 (NSFL…CFWS), 425–445 (WLYS…TAFY), 551–571 (LFPI…GIPF), 607–627 (VFSV…YKPV), and 723–743 (YLFF…FLNL).

The protein belongs to the complex I subunit 5 family. As to quaternary structure, NDH is composed of at least 16 different subunits, 5 of which are encoded in the nucleus.

It localises to the plastid. Its subcellular location is the chloroplast thylakoid membrane. The catalysed reaction is a plastoquinone + NADH + (n+1) H(+)(in) = a plastoquinol + NAD(+) + n H(+)(out). The enzyme catalyses a plastoquinone + NADPH + (n+1) H(+)(in) = a plastoquinol + NADP(+) + n H(+)(out). Its function is as follows. NDH shuttles electrons from NAD(P)H:plastoquinone, via FMN and iron-sulfur (Fe-S) centers, to quinones in the photosynthetic chain and possibly in a chloroplast respiratory chain. The immediate electron acceptor for the enzyme in this species is believed to be plastoquinone. Couples the redox reaction to proton translocation, and thus conserves the redox energy in a proton gradient. In Helianthus annuus (Common sunflower), this protein is NAD(P)H-quinone oxidoreductase subunit 5, chloroplastic (ndhF).